We begin with the raw amino-acid sequence, 1892 residues long: Protein TIC 214 (1892 aa).

6 consecutive transmembrane segments (helical) span residues I18–G38, F64–L84, P87–H107, L124–L144, V172–I192, and I221–I241. 3 disordered regions span residues S250 to D300, R794 to R814, and R1581 to V1609. A compositionally biased stretch (acidic residues) spans V256–T268. Residues R1581–N1602 are compositionally biased toward basic and acidic residues.

Belongs to the TIC214 family. As to quaternary structure, part of the Tic complex.

The protein localises to the plastid. It localises to the chloroplast inner membrane. Its function is as follows. Involved in protein precursor import into chloroplasts. May be part of an intermediate translocation complex acting as a protein-conducting channel at the inner envelope. The chain is Protein TIC 214 from Nicotiana tomentosiformis (Tobacco).